The primary structure comprises 457 residues: Adenylyltransferase and sulfurtransferase MOCS3 (457 aa).

Residues 40–60 (ANGGGNGDGLADEGGERNTGT) form a disordered region. Residue Thr63 is modified to Phosphothreonine. Residues Gly102, Asp123, 130 to 134 (SNFHR), Lys147, and 191 to 192 (DN) contribute to the ATP site. Zn(2+) contacts are provided by Cys233 and Cys236. The active-site Glycyl thioester intermediate; for adenylyltransferase activity is the Cys250. Cys309 and Cys312 together coordinate Zn(2+). Residues 358 to 455 (ESQPHLLFDV…WTRKVDPDFP (98 aa)) form the Rhodanese domain. The Cysteine persulfide intermediate; for sulfurtransferase activity role is filled by Cys414.

In the N-terminal section; belongs to the HesA/MoeB/ThiF family. UBA4 subfamily. It depends on Zn(2+) as a cofactor.

The protein resides in the cytoplasm. It localises to the cytosol. The enzyme catalyses [molybdopterin-synthase sulfur-carrier protein]-C-terminal Gly-Gly + ATP + H(+) = [molybdopterin-synthase sulfur-carrier protein]-C-terminal Gly-Gly-AMP + diphosphate. The catalysed reaction is [molybdopterin-synthase sulfur-carrier protein]-C-terminal Gly-Gly-AMP + S-sulfanyl-L-cysteinyl-[cysteine desulfurase] + AH2 = [molybdopterin-synthase sulfur-carrier protein]-C-terminal-Gly-aminoethanethioate + L-cysteinyl-[cysteine desulfurase] + A + AMP + 2 H(+). It functions in the pathway tRNA modification; 5-methoxycarbonylmethyl-2-thiouridine-tRNA biosynthesis. The protein operates within cofactor biosynthesis; molybdopterin biosynthesis. Its function is as follows. Plays a central role in 2-thiolation of mcm(5)S(2)U at tRNA wobble positions of cytosolic tRNA(Lys), tRNA(Glu) and tRNA(Gln). Also essential during biosynthesis of the molybdenum cofactor. Acts by mediating the C-terminal thiocarboxylation of sulfur carriers URM1 and MOCS2A. Its N-terminus first activates URM1 and MOCS2A as acyl-adenylates (-COAMP), then the persulfide sulfur on the catalytic cysteine is transferred to URM1 and MOCS2A to form thiocarboxylation (-COSH) of their C-terminus. The reaction probably involves hydrogen sulfide that is generated from the persulfide intermediate and that acts as a nucleophile towards URM1 and MOCS2A. Subsequently, a transient disulfide bond is formed. Does not use thiosulfate as sulfur donor; NFS1 probably acting as a sulfur donor for thiocarboxylation reactions. The protein is Adenylyltransferase and sulfurtransferase MOCS3 of Drosophila willistoni (Fruit fly).